The following is a 179-amino-acid chain: Natural killer cells antigen CD94 (179 aa).

At 1-10 (MAVFKTTLWW) the chain is on the cytoplasmic side. Residues 11-31 (LISGTLGIICLSLTATLGILL) form a helical; Signal-anchor for type II membrane protein membrane-spanning segment. Over 32 to 179 (KNSFTKLSIE…NRYICKQQLI (148 aa)) the chain is Extracellular. Disulfide bonds link cysteine 58–cysteine 70 and cysteine 61–cysteine 72. Positions 68–175 (YRCNCYFISS…CEDKNRYICK (108 aa)) constitute a C-type lectin domain. Asparagine 83 and asparagine 132 each carry an N-linked (GlcNAc...) asparagine glycan. 2 disulfides stabilise this stretch: cysteine 89/cysteine 174 and cysteine 152/cysteine 166.

As to quaternary structure, can form disulfide-bonded heterodimer with NKG2 family members KLRC1 and KLRC2. KLRD1-KLRC1 heterodimer interacts with peptide-bound MHC-E-B2M heterotrimeric complex. KLRD1 plays a prominent role in directly interacting with MHC-E. KLRD1-KLRC1 interacts with much higher affinity with peptide-bound MHC-E-B2M than KLRD1-KLRC2. Interacts with the adapter protein TYROBP/DAP12; this interaction is required for cell surface expression and cell activation. In terms of tissue distribution, natural killer cells.

Its subcellular location is the cell membrane. Its function is as follows. Immune receptor involved in self-nonself discrimination. In complex with KLRC1 or KLRC2 on cytotoxic and regulatory lymphocyte subsets, recognizes non-classical major histocompatibility (MHC) class Ib molecule MHC-E loaded with self-peptides derived from the signal sequence of classical MHC class Ia and non-classical MHC class Ib molecules. Enables cytotoxic cells to monitor the expression of MHC class I molecules in healthy cells and to tolerate self. Primarily functions as a ligand binding subunit as it lacks the capacity to signal. Functionally, KLRD1-KLRC1 acts as an immune inhibitory receptor. Key inhibitory receptor on natural killer (NK) cells that regulates their activation and effector functions. Dominantly counteracts T cell receptor signaling on a subset of memory/effector CD8-positive T cells as part of an antigen-driven response to avoid autoimmunity. On intraepithelial CD8-positive gamma-delta regulatory T cells triggers TGFB1 secretion, which in turn limits the cytotoxic programming of intraepithelial CD8-positive alpha-beta T cells, distinguishing harmless from pathogenic antigens. In MHC-E-rich tumor microenvironment, acts as an immune inhibitory checkpoint and may contribute to progressive loss of effector functions of NK cells and tumor-specific T cells, a state known as cell exhaustion. Upon MHC-E-peptide binding, transmits intracellular signals through KLRC1 immunoreceptor tyrosine-based inhibition motifs (ITIMs) by recruiting INPP5D/SHIP-1 and INPPL1/SHIP-2 tyrosine phosphatases to ITIMs, and ultimately opposing signals transmitted by activating receptors through dephosphorylation of proximal signaling molecules. In terms of biological role, KLRD1-KLRC2 acts as an immune activating receptor. On cytotoxic lymphocyte subsets recognizes MHC-E loaded with signal sequence-derived peptides from non-classical MHC class Ib MHC-G molecules, likely playing a role in the generation and effector functions of adaptive NK cells and in maternal-fetal tolerance during pregnancy. Regulates the effector functions of terminally differentiated cytotoxic lymphocyte subsets, and in particular may play a role in adaptive NK cell response to viral infection. Upon MHC-E-peptide binding, transmits intracellular signals via the adapter protein TYROBP/DAP12, triggering the phosphorylation of proximal signaling molecules and cell activation. The chain is Natural killer cells antigen CD94 (KLRD1) from Pongo pygmaeus (Bornean orangutan).